Here is a 552-residue protein sequence, read N- to C-terminus: Probable bifunctional methylthioribose-1-phosphate isomerase/methylthioribulose-1-phosphate dehydratase (552 aa).

The interval 1-333 (MRPIDDSSLT…VVTEHGVVHG (333 aa)) is methylthioribose-1-phosphate isomerase activity. Substrate is bound by residues 49 to 51 (RGA), R91, and Q195. D236 serves as the catalytic Proton donor. Position 246 to 247 (246 to 247 (NK)) interacts with substrate. Residues 334 to 535 (TVAAEPGARI…AVCELVLRTG (202 aa)) form a methylthioribulose-1-phosphate dehydratase activity region. Residues H427 and H429 each coordinate Zn(2+).

In the N-terminal section; belongs to the eIF-2B alpha/beta/delta subunits family. MtnA subfamily. This sequence in the C-terminal section; belongs to the aldolase class II family. MtnB subfamily. The cofactor is Zn(2+).

It catalyses the reaction 5-(methylsulfanyl)-alpha-D-ribose 1-phosphate = 5-(methylsulfanyl)-D-ribulose 1-phosphate. The catalysed reaction is 5-(methylsulfanyl)-D-ribulose 1-phosphate = 5-methylsulfanyl-2,3-dioxopentyl phosphate + H2O. The protein operates within amino-acid biosynthesis; L-methionine biosynthesis via salvage pathway; L-methionine from S-methyl-5-thio-alpha-D-ribose 1-phosphate: step 1/6. It participates in amino-acid biosynthesis; L-methionine biosynthesis via salvage pathway; L-methionine from S-methyl-5-thio-alpha-D-ribose 1-phosphate: step 2/6. In terms of biological role, bifunctional protein that catalyzes the interconversion of methylthioribose-1-phosphate (MTR-1-P) into methylthioribulose-1-phosphate (MTRu-1-P), and the dehydration of methylthioribulose-1-phosphate (MTRu-1-P) into 2,3-diketo-5-methylthiopentyl-1-phosphate (DK-MTP-1-P). In Nocardia farcinica (strain IFM 10152), this protein is Probable bifunctional methylthioribose-1-phosphate isomerase/methylthioribulose-1-phosphate dehydratase (mtnAB).